The following is a 394-amino-acid chain: Elongation factor Tu (394 aa).

In terms of domain architecture, tr-type G spans 10–204; that stretch reads KPHVNVGTIG…ALDTYIPEPE (195 aa). Residues 19–26 are G1; that stretch reads GHVDHGKT. GTP is bound at residue 19-26; the sequence is GHVDHGKT. Threonine 26 serves as a coordination point for Mg(2+). Residues 60–64 are G2; that stretch reads GITIN. Residues 81 to 84 form a G3 region; it reads DCPG. GTP contacts are provided by residues 81–85 and 136–139; these read DCPGH and NKCD. The interval 136–139 is G4; that stretch reads NKCD. The tract at residues 174–176 is G5; sequence SAL.

Belongs to the TRAFAC class translation factor GTPase superfamily. Classic translation factor GTPase family. EF-Tu/EF-1A subfamily. Monomer.

The protein resides in the cytoplasm. The catalysed reaction is GTP + H2O = GDP + phosphate + H(+). GTP hydrolase that promotes the GTP-dependent binding of aminoacyl-tRNA to the A-site of ribosomes during protein biosynthesis. The sequence is that of Elongation factor Tu from Vibrio cholerae serotype O1 (strain ATCC 39541 / Classical Ogawa 395 / O395).